A 150-amino-acid polypeptide reads, in one-letter code: Large ribosomal subunit protein bL9 (150 aa).

It belongs to the bacterial ribosomal protein bL9 family.

In terms of biological role, binds to the 23S rRNA. In Aromatoleum aromaticum (strain DSM 19018 / LMG 30748 / EbN1) (Azoarcus sp. (strain EbN1)), this protein is Large ribosomal subunit protein bL9.